A 504-amino-acid polypeptide reads, in one-letter code: Maturase K (504 aa).

It belongs to the intron maturase 2 family. MatK subfamily.

It localises to the plastid. The protein resides in the chloroplast. Usually encoded in the trnK tRNA gene intron. Probably assists in splicing its own and other chloroplast group II introns. The protein is Maturase K of Matthiola incana (Common stock).